The chain runs to 121 residues: Iron-sulfur cluster assembly protein CyaY (121 aa).

This sequence belongs to the frataxin family.

In terms of biological role, involved in iron-sulfur (Fe-S) cluster assembly. May act as a regulator of Fe-S biogenesis. The sequence is that of Iron-sulfur cluster assembly protein CyaY from Buchnera aphidicola subsp. Schizaphis graminum (strain Sg).